A 252-amino-acid polypeptide reads, in one-letter code: Eukaryotic translation initiation factor 3 subunit J (252 aa).

2 disordered regions span residues 24 to 107 and 209 to 232; these read VPAG…TPEE and KQSK…TMKD. Residues 36–56 are compositionally biased toward acidic residues; sequence EDEEDDVKDNWDDEEEEEEVK. Residues 57-107 are compositionally biased toward basic and acidic residues; it reads EAEVKQEPKVSEKKKIAEKIKEKEKQQKKKQEELKKRLEAPEEHKELTPEE. Residues 65-130 adopt a coiled-coil conformation; sequence KVSEKKKIAE…ESDLELAKET (66 aa).

Belongs to the eIF-3 subunit J family. Component of the eukaryotic translation initiation factor 3 (eIF-3) complex, which is composed of 13 subunits: EIF3A, EIF3B, EIF3C, EIF3D, EIF3E, EIF3F, EIF3G, EIF3H, EIF3I, EIF3J, EIF3K, EIF3L and EIF3M.

The protein resides in the cytoplasm. Functionally, component of the eukaryotic translation initiation factor 3 (eIF-3) complex, which is involved in protein synthesis of a specialized repertoire of mRNAs and, together with other initiation factors, stimulates binding of mRNA and methionyl-tRNAi to the 40S ribosome. The eIF-3 complex specifically targets and initiates translation of a subset of mRNAs involved in cell proliferation. This chain is Eukaryotic translation initiation factor 3 subunit J, found in Gallus gallus (Chicken).